A 596-amino-acid chain; its full sequence is ATP-dependent lipid A-core flippase (596 aa).

A run of 6 helical transmembrane segments spans residues 34–54 (VWVL…EAGI), 80–100 (AAVV…GYLL), 138–158 (AVVF…ITLV), 164–184 (VVFL…IVAI), 263–283 (QPLT…IAVV), and 292–312 (VGGF…LKHL). The region spanning 38–321 (VAGVLAMAAV…LMDVNQPLQR (284 aa)) is the ABC transmembrane type-1 domain. One can recognise an ABC transporter domain in the interval 353–589 (IEFSHVSFSY…GGLYAHLHRI (237 aa)). ATP is bound at residue 389–396 (GPSGSGKT).

Belongs to the ABC transporter superfamily. Lipid exporter (TC 3.A.1.106) family. As to quaternary structure, homodimer.

The protein localises to the cell inner membrane. It carries out the reaction ATP + H2O + lipid A-core oligosaccharideSide 1 = ADP + phosphate + lipid A-core oligosaccharideSide 2.. In terms of biological role, involved in lipopolysaccharide (LPS) biosynthesis. Translocates lipid A-core from the inner to the outer leaflet of the inner membrane. Transmembrane domains (TMD) form a pore in the inner membrane and the ATP-binding domain (NBD) is responsible for energy generation. The chain is ATP-dependent lipid A-core flippase from Burkholderia mallei (strain ATCC 23344).